The chain runs to 113 residues: Beta-microseminoprotein (113 aa).

A signal peptide spans 1–20; that stretch reads MEAWLGSLLFLATMVIASKA. Disulfide bonds link C22–C69, C38–C61, C56–C92, C59–C68, and C83–C106.

It belongs to the beta-microseminoprotein family. In terms of assembly, homodimer; Interacts with PI16.

The protein resides in the secreted. The chain is Beta-microseminoprotein (Msmb) from Mus musculus (Mouse).